The sequence spans 152 residues: Large ribosomal subunit protein uL13 (152 aa).

Residues 133 to 152 (EHPHQAQKPQPLTINTIPGA) are disordered. A compositionally biased stretch (polar residues) spans 139-152 (QKPQPLTINTIPGA).

Belongs to the universal ribosomal protein uL13 family. In terms of assembly, part of the 50S ribosomal subunit.

In terms of biological role, this protein is one of the early assembly proteins of the 50S ribosomal subunit, although it is not seen to bind rRNA by itself. It is important during the early stages of 50S assembly. This chain is Large ribosomal subunit protein uL13, found in Thermosynechococcus vestitus (strain NIES-2133 / IAM M-273 / BP-1).